We begin with the raw amino-acid sequence, 691 residues long: DNA ligase (691 aa).

Residues D36–D40, S85–L86, and E118 contribute to the NAD(+) site. K120 functions as the N6-AMP-lysine intermediate in the catalytic mechanism. 4 residues coordinate NAD(+): R141, E178, K295, and K319. Positions 413, 416, 431, and 437 each coordinate Zn(2+). One can recognise a BRCT domain in the interval G595–P684.

It belongs to the NAD-dependent DNA ligase family. LigA subfamily. It depends on Mg(2+) as a cofactor. The cofactor is Mn(2+).

The enzyme catalyses NAD(+) + (deoxyribonucleotide)n-3'-hydroxyl + 5'-phospho-(deoxyribonucleotide)m = (deoxyribonucleotide)n+m + AMP + beta-nicotinamide D-nucleotide.. Functionally, DNA ligase that catalyzes the formation of phosphodiester linkages between 5'-phosphoryl and 3'-hydroxyl groups in double-stranded DNA using NAD as a coenzyme and as the energy source for the reaction. It is essential for DNA replication and repair of damaged DNA. In Chromohalobacter salexigens (strain ATCC BAA-138 / DSM 3043 / CIP 106854 / NCIMB 13768 / 1H11), this protein is DNA ligase.